A 175-amino-acid polypeptide reads, in one-letter code: Co-chaperone protein HscB homolog (175 aa).

Residues 7-79 enclose the J domain; it reads SHFDLFDLPA…LKRATYLLHL (73 aa).

The protein belongs to the HscB family. As to quaternary structure, interacts with HscA and stimulates its ATPase activity.

Its function is as follows. Co-chaperone involved in the maturation of iron-sulfur cluster-containing proteins. Seems to help targeting proteins to be folded toward HscA. The sequence is that of Co-chaperone protein HscB homolog from Paraburkholderia phytofirmans (strain DSM 17436 / LMG 22146 / PsJN) (Burkholderia phytofirmans).